The primary structure comprises 314 residues: Methionyl-tRNA formyltransferase (314 aa).

S110–P113 contributes to the (6S)-5,6,7,8-tetrahydrofolate binding site.

Belongs to the Fmt family.

The enzyme catalyses L-methionyl-tRNA(fMet) + (6R)-10-formyltetrahydrofolate = N-formyl-L-methionyl-tRNA(fMet) + (6S)-5,6,7,8-tetrahydrofolate + H(+). Its function is as follows. Attaches a formyl group to the free amino group of methionyl-tRNA(fMet). The formyl group appears to play a dual role in the initiator identity of N-formylmethionyl-tRNA by promoting its recognition by IF2 and preventing the misappropriation of this tRNA by the elongation apparatus. The polypeptide is Methionyl-tRNA formyltransferase (Bacillus cereus (strain G9842)).